Reading from the N-terminus, the 545-residue chain is Afadin- and alpha-actinin-binding protein B (545 aa).

2 coiled-coil regions span residues 106–287 (RSKE…SQRK) and 358–442 (ARGD…AIRL). Residues 497 to 545 (HDRHLASSGDHYQRPRKTLPITPSSKHSLTQRESVAWRDSSISPNGTDF) form a disordered region. Polar residues-rich tracts occupy residues 517-529 (ITPS…TQRE) and 536-545 (SSISPNGTDF).

Belongs to the ADIP family. Interacts with WRAP73.

The protein resides in the cell junction. Its subcellular location is the adherens junction. It localises to the cytoplasm. The protein localises to the cytoskeleton. It is found in the microtubule organizing center. The protein resides in the centrosome. Its subcellular location is the centriolar satellite. In terms of biological role, belongs to an adhesion system, which plays a role in the organization of homotypic, interneuronal and heterotypic cell-cell adherens junctions (AJs). Involved in cell movement. Acts as a centrosome maturation factor, probably by maintaining the integrity of the pericentriolar material and proper microtubule nucleation at mitotic spindle poles. The function seems to implicate at least in part WRAP73; the SSX2IP:WRAP73 complex is proposed to act as regulator of spindle anchoring at the mitotic centrosome. This Xenopus laevis (African clawed frog) protein is Afadin- and alpha-actinin-binding protein B (ssx2ip-b).